Reading from the N-terminus, the 378-residue chain is Succinyl-diaminopimelate desuccinylase (378 aa).

His-67 lines the Zn(2+) pocket. Residue Asp-69 is part of the active site. Asp-100 contributes to the Zn(2+) binding site. Glu-134 functions as the Proton acceptor in the catalytic mechanism. 3 residues coordinate Zn(2+): Glu-135, Glu-163, and His-349.

Belongs to the peptidase M20A family. DapE subfamily. Homodimer. Requires Zn(2+) as cofactor. Co(2+) serves as cofactor.

The catalysed reaction is N-succinyl-(2S,6S)-2,6-diaminopimelate + H2O = (2S,6S)-2,6-diaminopimelate + succinate. Its pathway is amino-acid biosynthesis; L-lysine biosynthesis via DAP pathway; LL-2,6-diaminopimelate from (S)-tetrahydrodipicolinate (succinylase route): step 3/3. In terms of biological role, catalyzes the hydrolysis of N-succinyl-L,L-diaminopimelic acid (SDAP), forming succinate and LL-2,6-diaminopimelate (DAP), an intermediate involved in the bacterial biosynthesis of lysine and meso-diaminopimelic acid, an essential component of bacterial cell walls. In Pasteurella multocida (strain Pm70), this protein is Succinyl-diaminopimelate desuccinylase.